Reading from the N-terminus, the 156-residue chain is Transcriptional repressor NrdR (156 aa).

The segment at 3-34 is a zinc-finger region; the sequence is CPYCRHPDSRVVDSREAEEGAAIRRRRSCPNC. The ATP-cone domain occupies 46–136; that stretch reads LSVVKRSGVT…VYRSFTSAED (91 aa).

The protein belongs to the NrdR family. Zn(2+) is required as a cofactor.

In terms of biological role, negatively regulates transcription of bacterial ribonucleotide reductase nrd genes and operons by binding to NrdR-boxes. The sequence is that of Transcriptional repressor NrdR from Nocardia farcinica (strain IFM 10152).